The following is a 490-amino-acid chain: MTQWEVVIGLETHAQLSTVSKIFSGASTQFGAQPNTQACPVDLALPGVLPVLNRGAVERAIRFGLAIGATVAPRSVFARKNYFYPDLPKGYQISQYEIPVVQGGQITIQVPANEKAGKQAYSKTVNLTRAHLEEDAGKSLHEDFAGMTGIDLNRAGTPLLEIVTEPEMRSAAEAVAYAKALHGLVMWLGICDGNMQEGSFRCDANVSVRPVGQEKFGTRAEIKNLNSFRFLEDAINYEVRRQIELIEDGGEVVQETRLYDPDKRETRSMRSKEDAHDYRYFPDPDLMPLVIGADWIARVKGEMPELPAAMQQRFIEQYGVSAYDAGVLTSTKAMAEYFEALVAKAGAANAKLAANWLMGDVSSQLNRDGIDIDACPVSAAQLALVLQRIADGTISNKIAKEIFVTIWDEKAADEGAADRIIEAKGLKQISDTGALEAIIDEVLAANAKSVEEFRAGKDKAFNALVGQAMKATKGKANPQQVNELLKKKLG.

Belongs to the GatB/GatE family. GatB subfamily. As to quaternary structure, heterotrimer of A, B and C subunits.

It carries out the reaction L-glutamyl-tRNA(Gln) + L-glutamine + ATP + H2O = L-glutaminyl-tRNA(Gln) + L-glutamate + ADP + phosphate + H(+). The catalysed reaction is L-aspartyl-tRNA(Asn) + L-glutamine + ATP + H2O = L-asparaginyl-tRNA(Asn) + L-glutamate + ADP + phosphate + 2 H(+). Allows the formation of correctly charged Asn-tRNA(Asn) or Gln-tRNA(Gln) through the transamidation of misacylated Asp-tRNA(Asn) or Glu-tRNA(Gln) in organisms which lack either or both of asparaginyl-tRNA or glutaminyl-tRNA synthetases. The reaction takes place in the presence of glutamine and ATP through an activated phospho-Asp-tRNA(Asn) or phospho-Glu-tRNA(Gln). In Burkholderia pseudomallei (strain K96243), this protein is Aspartyl/glutamyl-tRNA(Asn/Gln) amidotransferase subunit B.